Consider the following 141-residue polypeptide: Hemoglobin subunit alpha (141 aa).

Residues 1-141 (VLSSKDKANV…VSTVLTSKYR (141 aa)) enclose the Globin domain. A Phosphoserine modification is found at Ser-3. 2 positions are modified to N6-succinyllysine: Lys-7 and Lys-11. N6-acetyllysine; alternate is present on Lys-16. At Lys-16 the chain carries N6-succinyllysine; alternate. Residue Tyr-24 is modified to Phosphotyrosine. Lys-40 is subject to N6-succinyllysine. Residue Ser-49 is modified to Phosphoserine. O2 is bound at residue His-58. His-87 lines the heme b pocket. Phosphoserine is present on Ser-102. Thr-108 carries the post-translational modification Phosphothreonine. A Phosphoserine modification is found at Ser-124. A phosphothreonine mark is found at Thr-134 and Thr-137. Ser-138 carries the phosphoserine modification.

Belongs to the globin family. Heterotetramer of two alpha chains and two beta chains. Red blood cells.

Involved in oxygen transport from the lung to the various peripheral tissues. Functionally, hemopressin acts as an antagonist peptide of the cannabinoid receptor CNR1. Hemopressin-binding efficiently blocks cannabinoid receptor CNR1 and subsequent signaling. The protein is Hemoglobin subunit alpha (HBA) of Lama vicugna (Vicugna).